We begin with the raw amino-acid sequence, 303 residues long: Taste receptor type 2 member 13 (303 aa).

Topologically, residues 1-7 (MESALPS) are extracellular. A helical transmembrane segment spans residues 8 to 28 (IFTLVIIAEFIIGNLSNGFIV). Over 29–55 (LINCIDWVSKRELSSVDKLLIILAISR) the chain is Cytoplasmic. A helical membrane pass occupies residues 56–76 (IGLIWEILVSWFLALHYLAIF). Topologically, residues 77-85 (VSGTGLRIM) are extracellular. The helical transmembrane segment at 86–106 (IFSWIVSNHFNLWLATIFSIF) threads the bilayer. Residues 107–128 (YLLKIASFSSPAFLYLKWRVNK) lie on the Cytoplasmic side of the membrane. A helical transmembrane segment spans residues 129 to 149 (VILMILLGTLVFLFLNLIQIN). At 150 to 184 (MHIKDWLDRYERNTTWNFSMSDFETFSVSVKFTMT) the chain is on the extracellular side. Asn162 and Asn166 each carry an N-linked (GlcNAc...) asparagine glycan. The chain crosses the membrane as a helical span at residues 185-205 (MFSLTPFTVAFISFLLLIFSL). Topologically, residues 206 to 232 (QKHLQKMQLNYKGHRDPRTKVHTNALK) are cytoplasmic. The helical transmembrane segment at 233-253 (IVISFLLFYASFFLCVLISWI) threads the bilayer. Residues 254–261 (SELYQNTV) are Extracellular-facing. A helical transmembrane segment spans residues 262 to 282 (IYMLCETIGVFSPSSHSFLLI). Topologically, residues 283 to 303 (LGNAKLRQAFLLVAAKVWAKR) are cytoplasmic.

The protein belongs to the G-protein coupled receptor T2R family. As to expression, expressed in subsets of taste receptor cells of the tongue and palate epithelium and exclusively in gustducin-positive cells.

It localises to the membrane. Receptor that may play a role in the perception of bitterness and is gustducin-linked. May play a role in sensing the chemical composition of the gastrointestinal content. The activity of this receptor may stimulate alpha gustducin, mediate PLC-beta-2 activation and lead to the gating of TRPM5. In Homo sapiens (Human), this protein is Taste receptor type 2 member 13 (TAS2R13).